The chain runs to 693 residues: Phosphoribosylformylglycinamidine synthase subunit PurL (693 aa).

The active site involves histidine 34. ATP-binding residues include tyrosine 37 and lysine 76. Glutamate 78 provides a ligand contact to Mg(2+). Substrate contacts are provided by residues 79-82 (SHNH) and arginine 101. The Proton acceptor role is filled by histidine 80. Position 102 (aspartate 102) interacts with Mg(2+). Residue glutamine 222 participates in substrate binding. Aspartate 248 provides a ligand contact to Mg(2+). 292-294 (ETQ) is a substrate binding site. ATP contacts are provided by aspartate 470 and glycine 507. Serine 510 contributes to the substrate binding site.

This sequence belongs to the FGAMS family. As to quaternary structure, monomer. Part of the FGAM synthase complex composed of 1 PurL, 1 PurQ and 2 PurS subunits.

Its subcellular location is the cytoplasm. It catalyses the reaction N(2)-formyl-N(1)-(5-phospho-beta-D-ribosyl)glycinamide + L-glutamine + ATP + H2O = 2-formamido-N(1)-(5-O-phospho-beta-D-ribosyl)acetamidine + L-glutamate + ADP + phosphate + H(+). It functions in the pathway purine metabolism; IMP biosynthesis via de novo pathway; 5-amino-1-(5-phospho-D-ribosyl)imidazole from N(2)-formyl-N(1)-(5-phospho-D-ribosyl)glycinamide: step 1/2. In terms of biological role, part of the phosphoribosylformylglycinamidine synthase complex involved in the purines biosynthetic pathway. Catalyzes the ATP-dependent conversion of formylglycinamide ribonucleotide (FGAR) and glutamine to yield formylglycinamidine ribonucleotide (FGAM) and glutamate. The FGAM synthase complex is composed of three subunits. PurQ produces an ammonia molecule by converting glutamine to glutamate. PurL transfers the ammonia molecule to FGAR to form FGAM in an ATP-dependent manner. PurS interacts with PurQ and PurL and is thought to assist in the transfer of the ammonia molecule from PurQ to PurL. This Pyrobaculum neutrophilum (strain DSM 2338 / JCM 9278 / NBRC 100436 / V24Sta) (Thermoproteus neutrophilus) protein is Phosphoribosylformylglycinamidine synthase subunit PurL.